The chain runs to 449 residues: Protein adenylyltransferase FICD (449 aa).

A helical membrane pass occupies residues 15 to 35; sequence LLWGWGPILFGLLGSVFVLLL. TPR repeat units lie at residues 96-129 and 130-163; these read AKAA…NPEF and VEAL…SPCH. Residues 220-225 carry the Inhibitory (S/T)XXXE(G/N) motif motif; it reads TVAIEG. ATP-binding positions include Glu-224, 250–251, 358–360, and Arg-364; these read EQ and GNG. The Fido domain occupies 275 to 410; sequence ITVNDILEIH…VRPFIRFIAK (136 aa).

It belongs to the fic family.

It localises to the membrane. The enzyme catalyses L-tyrosyl-[protein] + ATP = O-(5'-adenylyl)-L-tyrosyl-[protein] + diphosphate. It catalyses the reaction L-threonyl-[protein] + ATP = 3-O-(5'-adenylyl)-L-threonyl-[protein] + diphosphate. Adenylyltransferase activity is inhibited by the inhibitory helix present at the N-terminus: Glu-224 binds ATP and competes with ATP-binding at Arg-364, thereby preventing adenylyltransferase activity. Activation dissociates ATP-binding from Glu-224, allowing ordered binding of the entire ATP moiety with the alpha-phosphate in an orientation that is productive for accepting an incoming target hydroxyl side chain. Its function is as follows. Adenylyltransferase that mediates the addition of adenosine 5'-monophosphate (AMP) to specific residues of target proteins. The chain is Protein adenylyltransferase FICD (ficd) from Danio rerio (Zebrafish).